Here is a 397-residue protein sequence, read N- to C-terminus: UPF0761 membrane protein Kkor_1635 (397 aa).

The next 6 membrane-spanning stretches (helical) occupy residues 36-56, 92-112, 132-152, 168-188, 201-221, and 237-257; these read MLALVPLMTVAVSLMAVFPSF, NLSAIGLGFLIVTSLLLMRSI, ILAYWAMLTMAPILIAASLAA, ILTFGLPFILIVLAFSALYMV, IAAVITAILFEAAKYGFAIFV, and IPIFFLWVYLSWSILLLGVIV.

Belongs to the UPF0761 family.

The protein resides in the cell inner membrane. The sequence is that of UPF0761 membrane protein Kkor_1635 from Kangiella koreensis (strain DSM 16069 / JCM 12317 / KCTC 12182 / SW-125).